Consider the following 392-residue polypeptide: HORMA domain-containing protein 1 (392 aa).

Residues 25-227 (QQSLMFVKRL…TPFHTFRLKV (203 aa)) form the HORMA domain. Disordered stretches follow at residues 271–292 (IKTK…EPNL) and 371–392 (LESS…NEHT). Ser-374 bears the Phosphoserine mark. A Nuclear localization signal motif is present at residues 381-384 (KRRR).

Interacts with HORMAD2. Interacts with IHO1. In terms of processing, phosphorylated at Ser-375 in a SPO11-dependent manner.

It localises to the nucleus. The protein localises to the chromosome. In terms of biological role, plays a key role in meiotic progression. Regulates 3 different functions during meiosis: ensures that sufficient numbers of processed DNA double-strand breaks (DSBs) are available for successful homology search by increasing the steady-state numbers of single-stranded DSB ends. Promotes synaptonemal-complex formation independently of its role in homology search. Plays a key role in the male mid-pachytene checkpoint and the female meiotic prophase checkpoint: required for efficient build-up of ATR activity on unsynapsed chromosome regions, a process believed to form the basis of meiotic silencing of unsynapsed chromatin (MSUC) and meiotic prophase quality control in both sexes. This chain is HORMA domain-containing protein 1 (Hormad1), found in Rattus norvegicus (Rat).